Reading from the N-terminus, the 414-residue chain is Tryptophan synthase beta chain (414 aa).

Position 108 is an N6-(pyridoxal phosphate)lysine (Lys108).

This sequence belongs to the TrpB family. Tetramer of two alpha and two beta chains. Requires pyridoxal 5'-phosphate as cofactor.

It carries out the reaction (1S,2R)-1-C-(indol-3-yl)glycerol 3-phosphate + L-serine = D-glyceraldehyde 3-phosphate + L-tryptophan + H2O. It participates in amino-acid biosynthesis; L-tryptophan biosynthesis; L-tryptophan from chorismate: step 5/5. The beta subunit is responsible for the synthesis of L-tryptophan from indole and L-serine. This Beijerinckia indica subsp. indica (strain ATCC 9039 / DSM 1715 / NCIMB 8712) protein is Tryptophan synthase beta chain.